The chain runs to 385 residues: Cytochrome b (385 aa).

The next 4 helical transmembrane spans lie at methionine 32–methionine 52, tryptophan 76–alanine 98, valine 113–cysteine 133, and phenylalanine 179–methionine 199. Heme b is bound by residues histidine 82 and histidine 96. 2 residues coordinate heme b: histidine 183 and histidine 197. Histidine 202 is a binding site for a ubiquinone. Helical transmembrane passes span phenylalanine 225 to phenylalanine 245, leucine 289 to aspartate 309, isoleucine 321 to serine 341, and phenylalanine 348 to proline 368.

This sequence belongs to the cytochrome b family. In terms of assembly, fungal cytochrome b-c1 complex contains 10 subunits; 3 respiratory subunits, 2 core proteins and 5 low-molecular weight proteins. Cytochrome b-c1 complex is a homodimer. It depends on heme b as a cofactor.

It is found in the mitochondrion inner membrane. Component of the ubiquinol-cytochrome c reductase complex (complex III or cytochrome b-c1 complex) that is part of the mitochondrial respiratory chain. The b-c1 complex mediates electron transfer from ubiquinol to cytochrome c. Contributes to the generation of a proton gradient across the mitochondrial membrane that is then used for ATP synthesis. This chain is Cytochrome b (COB), found in Monosporozyma servazzii (Yeast).